The sequence spans 1180 residues: Pyruvate carboxylase 2 (1180 aa).

N-acetylserine is present on S2. The Biotin carboxylation domain occupies 19–471 (EKNKILVANR…WTTFIDDTPQ (453 aa)). The ATP site is built by K137, E221, and H256. The 198-residue stretch at 141 to 338 (RHLAARANVP…IVSAQIQIAA (198 aa)) folds into the ATP-grasp domain. The active site involves R313. Residues 558-825 (TLLMDTTWRD…DTGINVEHVR (268 aa)) enclose the Pyruvate carboxyltransferase domain. Residues 566–570 (RDAHQ) and R639 each bind substrate. An a divalent metal cation-binding site is contributed by D567. Residues K735, H765, and H767 each contribute to the a divalent metal cation site. Position 735 is an N6-carboxylysine (K735). Residue T899 coordinates substrate. The Biotinyl-binding domain maps to 1095–1170 (KADVHDTHQI…DASDLLVVLE (76 aa)). An N6-biotinyllysine modification is found at K1136.

In terms of assembly, homotetramer. Biotin serves as cofactor. The cofactor is Zn(2+).

Its subcellular location is the cytoplasm. It catalyses the reaction hydrogencarbonate + pyruvate + ATP = oxaloacetate + ADP + phosphate + H(+). It participates in carbohydrate biosynthesis; gluconeogenesis. Its function is as follows. Pyruvate carboxylase catalyzes a 2-step reaction, involving the ATP-dependent carboxylation of the covalently attached biotin in the first step and the transfer of the carboxyl group to pyruvate in the second. The sequence is that of Pyruvate carboxylase 2 (PYC2) from Saccharomyces cerevisiae (strain ATCC 204508 / S288c) (Baker's yeast).